We begin with the raw amino-acid sequence, 939 residues long: MGFNSIFKFRKTSLSLLLFAVYFIIGILYFIDKTRYKHSLPIDSEGVALLDNAWLDLQNITNKCHPYSSKENDRVHDYLLNRIADIINKTSYAEVSDDYSTNSRALFKQQDVFNASSIASRIIYFESSNILVKMEGRNPVLKSLLLSAHYDSTPSSHGVTDDGKGIVSLLALLEHFSKVQPERTLVFNFNNNEEFGLLGATIFFEHEWSKNVEYFINLEGTGIGGKAVLFRTTDTSTAKIYQNSVKNSPFGNSIYQQGFYNRYIGSETDYKVYENKGLRGWDIAFYKPRNLYHTIEDSIGHSSKPALWHMLHTSLQLSKYIAELDNISLGETQDLSPAVYFDLAGYTFVAIPSTKLFWINIALLIIMPIISIFLFSIVKKYNNEIIDSGNIWWRLPISAMSSGTIIIFTTKLIMKWNPYILSRNFLLPLIGLTFEFIILNSYILTMFENLSSSFDFKTIAINEISFLFWIVLAYQTWKLYDNNYQNTGIYPFTICYIVMATAGNIGYLFLIFKNIEIVEDEEASLVQYVSNEQSTIEGRYRDEINGRDDSSRDSNSASIPTRANDERAPLLTNSVDNINQRTILKESKLVYNYDWIIEFLLVVPFSTFLLYNSLELIMDAVNQTIQETGDLYKVYKILAIGSILISIPTLPFAYKIGCQLGKTLTFISIGCLLISMALAPFTEMNPIKFRFMQVNDKVEISGVTTHDNNKLRDMINNLPSVKRDDKKVQCQEITKFSSVCEYEGSPVHLVDNMYRDKLKLMEVIVLKDDRLSPERSPYAPITAEVEIRVQENRMCNVYFGQNKERIREVNVSIIEGNDRNSSVSLRYRVNNNRNGIDELQLHKLRFEANSYIVGIKWMPEILMSNEEEDDVLPIKVECYWGEYEESSVEVGEGEVGGGAVIEYYDKIPSYSEILEYKPVDVVIANREKGLVKLTEAMVL.

Residues 1-11 (MGFNSIFKFRK) lie on the Cytoplasmic side of the membrane. Residues 12–32 (TSLSLLLFAVYFIIGILYFID) form a helical membrane-spanning segment. Topologically, residues 33–356 (KTRYKHSLPI…TFVAIPSTKL (324 aa)) are vacuolar. 3 N-linked (GlcNAc...) asparagine glycosylation sites follow: Asn-59, Asn-88, and Asn-114. His-149 and Asp-161 together coordinate Zn(2+). Glu-193 serves as the catalytic Proton acceptor. Zn(2+)-binding residues include Glu-194, Glu-219, and His-293. N-linked (GlcNAc...) asparagine glycosylation is present at Asn-326. The helical transmembrane segment at 357 to 377 (FWINIALLIIMPIISIFLFSI) threads the bilayer. The Cytoplasmic portion of the chain corresponds to 378–388 (VKKYNNEIIDS). The helical transmembrane segment at 389–409 (GNIWWRLPISAMSSGTIIIFT) threads the bilayer. The Vacuolar portion of the chain corresponds to 410-424 (TKLIMKWNPYILSRN). The helical transmembrane segment at 425 to 445 (FLLPLIGLTFEFIILNSYILT) threads the bilayer. Topologically, residues 446–453 (MFENLSSS) are cytoplasmic. Residues 454–474 (FDFKTIAINEISFLFWIVLAY) form a helical membrane-spanning segment. Over 475-491 (QTWKLYDNNYQNTGIYP) the chain is Vacuolar. A helical transmembrane segment spans residues 492–512 (FTICYIVMATAGNIGYLFLIF). Topologically, residues 513 to 588 (KNIEIVEDEE…NQRTILKESK (76 aa)) are cytoplasmic. The span at 540-552 (YRDEINGRDDSSR) shows a compositional bias: basic and acidic residues. The segment at 540–561 (YRDEINGRDDSSRDSNSASIPT) is disordered. The helical transmembrane segment at 589 to 609 (LVYNYDWIIEFLLVVPFSTFL) threads the bilayer. Residues 610–636 (LYNSLELIMDAVNQTIQETGDLYKVYK) lie on the Vacuolar side of the membrane. N-linked (GlcNAc...) asparagine glycosylation occurs at Asn-622. The helical transmembrane segment at 637–657 (ILAIGSILISIPTLPFAYKIG) threads the bilayer. The Cytoplasmic segment spans residues 658-663 (CQLGKT). The chain crosses the membrane as a helical span at residues 664 to 684 (LTFISIGCLLISMALAPFTEM). Over 685-939 (NPIKFRFMQV…LVKLTEAMVL (255 aa)) the chain is Vacuolar. N-linked (GlcNAc...) asparagine glycans are attached at residues Asn-810 and Asn-820.

Belongs to the peptidase M28 family. Zn(2+) serves as cofactor.

It is found in the vacuole membrane. Its function is as follows. May be involved in vacuolar sorting and osmoregulation. The chain is Vacuolar membrane protease from Vanderwaltozyma polyspora (strain ATCC 22028 / DSM 70294 / BCRC 21397 / CBS 2163 / NBRC 10782 / NRRL Y-8283 / UCD 57-17) (Kluyveromyces polysporus).